A 130-amino-acid chain; its full sequence is Cytidine deaminase (130 aa).

Positions 3 to 130 (VNLEWIIKQL…ELLMNGFKKS (128 aa)) constitute a CMP/dCMP-type deaminase domain. 43-45 (NIE) contributes to the substrate binding site. Cys-54 contacts Zn(2+). Catalysis depends on Glu-56, which acts as the Proton donor. The Zn(2+) site is built by Cys-88 and Cys-91.

It belongs to the cytidine and deoxycytidylate deaminase family. In terms of assembly, homodimer. Zn(2+) is required as a cofactor.

It carries out the reaction cytidine + H2O + H(+) = uridine + NH4(+). It catalyses the reaction 2'-deoxycytidine + H2O + H(+) = 2'-deoxyuridine + NH4(+). In terms of biological role, this enzyme scavenges exogenous and endogenous cytidine and 2'-deoxycytidine for UMP synthesis. The sequence is that of Cytidine deaminase (cdd) from Mycoplasma genitalium (strain ATCC 33530 / DSM 19775 / NCTC 10195 / G37) (Mycoplasmoides genitalium).